Reading from the N-terminus, the 159-residue chain is Large ribosomal subunit protein uL30 (159 aa).

The protein belongs to the universal ribosomal protein uL30 family. In terms of assembly, part of the 50S ribosomal subunit.

In Ignicoccus hospitalis (strain KIN4/I / DSM 18386 / JCM 14125), this protein is Large ribosomal subunit protein uL30.